A 548-amino-acid polypeptide reads, in one-letter code: MLSRSAIRSASRSVVAANLVRSMNRVARPALVVAGRRFASAKAQPTEVSSILEERIRGVSEESNLNETGRVLAVGDGIARVFGLNNVQAEELVEFSSGVKGMALNLEPGQVGIVLFGSDRLVKEGEVVKRTGKIVDVGVGPELLGRVVDALGNPIDGKGPINASGRSRAQVKAPGILPRRSVHEPVQTGLKSVDALVPIGRGQRELIIGDRQTGKTAVALDTILNQKRWNNGTDESKKLYCVYVAVGQKRSTVAQLVQTLEQHDALKYSIIVAATASEAAPLQYIAPFTAAAIGEWFRDNGRHALIIYDDLSKQAVAYRQLSLLLRRPPGREAYPGDVFYLHSRLLERAAKMSEKNGGGSLTALPVIETQGGDVSAYIPTNVISITDGQIFLEAELFYKGIRPAINVGLSVSRVGSAAQVKALKQVAGSLKLFLAQYREVAAFAQFGSDLDASTKQTLARGERLTQLLKQNQYSPLAAEEQVPLIYAGVNGYLDNIDISRIAEFETKFLAYLKANHDEIVSAIREKGELSKELLATLKSATESFVATF.

209–216 (GDRQTGKT) is an ATP binding site.

Belongs to the ATPase alpha/beta chains family. In terms of assembly, F-type ATPases have 2 components, CF(1) - the catalytic core - and CF(0) - the membrane proton channel. CF(1) has five subunits: alpha(3), beta(3), gamma(1), delta(1), epsilon(1). CF(0) has three main subunits: a, b and c.

It is found in the mitochondrion. The protein localises to the mitochondrion inner membrane. Functionally, mitochondrial membrane ATP synthase (F(1)F(0) ATP synthase or Complex V) produces ATP from ADP in the presence of a proton gradient across the membrane which is generated by electron transport complexes of the respiratory chain. F-type ATPases consist of two structural domains, F(1) - containing the extramembraneous catalytic core, and F(0) - containing the membrane proton channel, linked together by a central stalk and a peripheral stalk. During catalysis, ATP synthesis in the catalytic domain of F(1) is coupled via a rotary mechanism of the central stalk subunits to proton translocation. Subunits alpha and beta form the catalytic core in F(1). Rotation of the central stalk against the surrounding alpha(3)beta(3) subunits leads to hydrolysis of ATP in three separate catalytic sites on the beta subunits. Subunit alpha does not bear the catalytic high-affinity ATP-binding sites. The protein is ATP synthase subunit alpha, mitochondrial (ATP1) of Kluyveromyces lactis (strain ATCC 8585 / CBS 2359 / DSM 70799 / NBRC 1267 / NRRL Y-1140 / WM37) (Yeast).